A 102-amino-acid polypeptide reads, in one-letter code: NADH-quinone oxidoreductase subunit K (102 aa).

3 helical membrane passes run 6–26, 30–50, and 62–82; these read MEHG…GLMV, ILFI…AFVV, and VMFI…LAIL.

The protein belongs to the complex I subunit 4L family. In terms of assembly, NDH-1 is composed of 13 different subunits. Subunits NuoA, H, J, K, L, M, N constitute the membrane sector of the complex.

It localises to the cell inner membrane. It carries out the reaction a quinone + NADH + 5 H(+)(in) = a quinol + NAD(+) + 4 H(+)(out). In terms of biological role, NDH-1 shuttles electrons from NADH, via FMN and iron-sulfur (Fe-S) centers, to quinones in the respiratory chain. The immediate electron acceptor for the enzyme in this species is believed to be ubiquinone. Couples the redox reaction to proton translocation (for every two electrons transferred, four hydrogen ions are translocated across the cytoplasmic membrane), and thus conserves the redox energy in a proton gradient. This chain is NADH-quinone oxidoreductase subunit K, found in Ectopseudomonas mendocina (strain ymp) (Pseudomonas mendocina).